We begin with the raw amino-acid sequence, 195 residues long: Peptidyl-tRNA hydrolase (195 aa).

Residue Tyr17 participates in tRNA binding. The Proton acceptor role is filled by His22. 3 residues coordinate tRNA: Phe68, Asn70, and Asn116.

This sequence belongs to the PTH family. Monomer.

It localises to the cytoplasm. The catalysed reaction is an N-acyl-L-alpha-aminoacyl-tRNA + H2O = an N-acyl-L-amino acid + a tRNA + H(+). In terms of biological role, hydrolyzes ribosome-free peptidyl-tRNAs (with 1 or more amino acids incorporated), which drop off the ribosome during protein synthesis, or as a result of ribosome stalling. Functionally, catalyzes the release of premature peptidyl moieties from peptidyl-tRNA molecules trapped in stalled 50S ribosomal subunits, and thus maintains levels of free tRNAs and 50S ribosomes. The sequence is that of Peptidyl-tRNA hydrolase from Shewanella amazonensis (strain ATCC BAA-1098 / SB2B).